The following is a 702-amino-acid chain: Ribosomal RNA large subunit methyltransferase K/L (702 aa).

The THUMP domain occupies 43–154 (LVYQSLMWSR…KETASIALDL (112 aa)).

It belongs to the methyltransferase superfamily. RlmKL family.

It localises to the cytoplasm. The catalysed reaction is guanosine(2445) in 23S rRNA + S-adenosyl-L-methionine = N(2)-methylguanosine(2445) in 23S rRNA + S-adenosyl-L-homocysteine + H(+). It carries out the reaction guanosine(2069) in 23S rRNA + S-adenosyl-L-methionine = N(2)-methylguanosine(2069) in 23S rRNA + S-adenosyl-L-homocysteine + H(+). Its function is as follows. Specifically methylates the guanine in position 2445 (m2G2445) and the guanine in position 2069 (m7G2069) of 23S rRNA. The chain is Ribosomal RNA large subunit methyltransferase K/L from Shigella sonnei (strain Ss046).